Consider the following 661-residue polypeptide: UvrABC system protein B (661 aa).

The region spanning 24–209 is the Helicase ATP-binding domain; the sequence is NGLNKGYRFQ…IFPSYQDEGI (186 aa). 37–44 lines the ATP pocket; sequence GVTGSGKT. The short motif at 90-113 is the Beta-hairpin element; it reads YYDYYQPEAYVPTKDLYIEKSADI. Positions 430 to 594 constitute a Helicase C-terminal domain; sequence DLVNEIVQVK…IIKPLMEDIF (165 aa). The UVR domain occupies 622-657; sequence EEYAALLEEEMYKAASELRYEDAARLRDELFKIKEE.

Belongs to the UvrB family. Forms a heterotetramer with UvrA during the search for lesions. Interacts with UvrC in an incision complex.

Its subcellular location is the cytoplasm. In terms of biological role, the UvrABC repair system catalyzes the recognition and processing of DNA lesions. A damage recognition complex composed of 2 UvrA and 2 UvrB subunits scans DNA for abnormalities. Upon binding of the UvrA(2)B(2) complex to a putative damaged site, the DNA wraps around one UvrB monomer. DNA wrap is dependent on ATP binding by UvrB and probably causes local melting of the DNA helix, facilitating insertion of UvrB beta-hairpin between the DNA strands. Then UvrB probes one DNA strand for the presence of a lesion. If a lesion is found the UvrA subunits dissociate and the UvrB-DNA preincision complex is formed. This complex is subsequently bound by UvrC and the second UvrB is released. If no lesion is found, the DNA wraps around the other UvrB subunit that will check the other stand for damage. The polypeptide is UvrABC system protein B (Fervidobacterium nodosum (strain ATCC 35602 / DSM 5306 / Rt17-B1)).